The sequence spans 240 residues: UDP-2,3-diacylglucosamine hydrolase (240 aa).

Positions 8, 10, 41, 79, and 114 each coordinate Mn(2+). Substrate is bound at residue 79 to 80 (NR). Substrate is bound by residues D122, S160, N164, K167, and H195. 2 residues coordinate Mn(2+): H195 and H197.

Belongs to the LpxH family. The cofactor is Mn(2+).

The protein resides in the cell inner membrane. The enzyme catalyses UDP-2-N,3-O-bis[(3R)-3-hydroxytetradecanoyl]-alpha-D-glucosamine + H2O = 2-N,3-O-bis[(3R)-3-hydroxytetradecanoyl]-alpha-D-glucosaminyl 1-phosphate + UMP + 2 H(+). It participates in glycolipid biosynthesis; lipid IV(A) biosynthesis; lipid IV(A) from (3R)-3-hydroxytetradecanoyl-[acyl-carrier-protein] and UDP-N-acetyl-alpha-D-glucosamine: step 4/6. Hydrolyzes the pyrophosphate bond of UDP-2,3-diacylglucosamine to yield 2,3-diacylglucosamine 1-phosphate (lipid X) and UMP by catalyzing the attack of water at the alpha-P atom. Involved in the biosynthesis of lipid A, a phosphorylated glycolipid that anchors the lipopolysaccharide to the outer membrane of the cell. The polypeptide is UDP-2,3-diacylglucosamine hydrolase (Yersinia enterocolitica serotype O:8 / biotype 1B (strain NCTC 13174 / 8081)).